The chain runs to 398 residues: MSVRLVLAKGREKSLLRRHPWVFSGAVARMEGKASLGETIDIVDHQGKWLARGAYSPASQIRARVWTFDLSESIDIAFFSRRLQQAQKWRDWLAQKDGLDSYRLIAGESDGLPGITIDRFGNFLVLQLLSAGAEYQRAALISALQTLYPECAIYDRSDVAVRKKEGMELTQGLVTGELPPALLPIEEHGMKLLVDIQHGHKTGYYLDQRDSRLATRRYVENKRVLNCFSYTGGFAVSALMGGCNQVVSVDTSQEALDIARQNVELNKLDLSKAEFVRDDVFKLLRTYRDRGEKFDVIVMDPPKFVENKSQLMGACRGYKDINMLAIQLLNEGGILLTFSCSGLMTSDLFQKIIADAAIDAGRDVQFIEQFRQAADHPVIATYPEGLYLKGFACRVIVM.

The 78-residue stretch at 2-79 (SVRLVLAKGR…LSESIDIAFF (78 aa)) folds into the PUA domain.

This sequence belongs to the methyltransferase superfamily. RlmI family.

Its subcellular location is the cytoplasm. The catalysed reaction is cytidine(1962) in 23S rRNA + S-adenosyl-L-methionine = 5-methylcytidine(1962) in 23S rRNA + S-adenosyl-L-homocysteine + H(+). In terms of biological role, specifically methylates the cytosine at position 1962 (m5C1962) of 23S rRNA. This is Ribosomal RNA large subunit methyltransferase I from Shigella dysenteriae serotype 1 (strain Sd197).